Consider the following 360-residue polypeptide: Protein RecA (360 aa).

Position 65–72 (65–72 (GPESSGKT)) interacts with ATP.

The protein belongs to the RecA family.

It localises to the cytoplasm. Can catalyze the hydrolysis of ATP in the presence of single-stranded DNA, the ATP-dependent uptake of single-stranded DNA by duplex DNA, and the ATP-dependent hybridization of homologous single-stranded DNAs. It interacts with LexA causing its activation and leading to its autocatalytic cleavage. The polypeptide is Protein RecA (Tolumonas auensis (strain DSM 9187 / NBRC 110442 / TA 4)).